The sequence spans 117 residues: Large ribosomal subunit protein uL18 (117 aa).

The protein belongs to the universal ribosomal protein uL18 family. Part of the 50S ribosomal subunit; part of the 5S rRNA/L5/L18/L25 subcomplex. Contacts the 5S and 23S rRNAs.

In terms of biological role, this is one of the proteins that bind and probably mediate the attachment of the 5S RNA into the large ribosomal subunit, where it forms part of the central protuberance. The chain is Large ribosomal subunit protein uL18 from Proteus mirabilis (strain HI4320).